The primary structure comprises 113 residues: UPF0145 protein TK1926 (113 aa).

Belongs to the UPF0145 family.

The sequence is that of UPF0145 protein TK1926 from Thermococcus kodakarensis (strain ATCC BAA-918 / JCM 12380 / KOD1) (Pyrococcus kodakaraensis (strain KOD1)).